Here is a 362-residue protein sequence, read N- to C-terminus: Putative gustatory receptor 89a (362 aa).

Residues 1–38 (MLRFPHVCGLCLLLKYWQILALAPFRTSEPMVARCQRW) are Cytoplasmic-facing. A helical membrane pass occupies residues 39–59 (MTLIAVFRWLLLTSMAPFVLW). At 60 to 74 (KSAAMYEATNVRHSM) the chain is on the extracellular side. A helical membrane pass occupies residues 75-95 (VFKTIALATMTGDVCISLALL). Residues 96–126 (GNHLWNRRELANLVNDLARLHRRRRLSWWST) are Cytoplasmic-facing. Residues 127–147 (LFLWLKLLLSLYDLLCSVPFL) traverse the membrane as a helical segment. Residues 148–166 (KGAGGRLPWSQLVAYGVQL) are Extracellular-facing. The chain crosses the membrane as a helical span at residues 167 to 187 (YFQHVASVYGNGIFGGILLML). Topologically, residues 188–223 (ECYNQLEREEPTNLARLLQKEYSWLRLIQRFVKLFQ) are cytoplasmic. A helical transmembrane segment spans residues 224–244 (LGIFLLVLGSFVNIMVNIYAF). The Extracellular portion of the chain corresponds to 245-255 (MSYYVSLHGVP). Residues 256 to 276 (LTISNNCLVLAIQLYAVILAA) traverse the membrane as a helical segment. Topologically, residues 277-333 (HLCQVRSAKLRKKCLQLEYVPEGLTQEQAMASTPFPVLTPTGNVKFRILGVFILDNS) are cytoplasmic. Residues 334 to 354 (FWLFLVSYAMNFIVVILQTSF) form a helical membrane-spanning segment. Topologically, residues 355-362 (EHINHGEI) are extracellular.

It belongs to the insect chemoreceptor superfamily. Gustatory receptor (GR) family. Gr77a subfamily.

The protein resides in the cell membrane. Probable gustatory receptor which mediates acceptance or avoidance behavior, depending on its substrates. The protein is Putative gustatory receptor 89a (Gr89a) of Drosophila melanogaster (Fruit fly).